We begin with the raw amino-acid sequence, 45 residues long: Iota-conotoxin-like R11.12 (45 aa).

Disulfide bonds link Cys5–Cys19, Cys12–Cys22, Cys18–Cys27, and Cys21–Cys36. A D-leucine modification is found at Leu43. Arg45 is a propeptide (removed by a carboxypeptidase).

Belongs to the conotoxin I1 superfamily. In terms of tissue distribution, expressed by the venom duct.

The protein localises to the secreted. Iota-conotoxins bind to voltage-gated sodium channels (Nav) and act as agonists by shifting the voltage-dependence of activation to more hyperpolarized levels. Produces general excitatory symptoms. This is Iota-conotoxin-like R11.12 from Conus radiatus (Rayed cone).